Reading from the N-terminus, the 358-residue chain is UDP-N-acetylglucosamine--N-acetylmuramyl-(pentapeptide) pyrophosphoryl-undecaprenol N-acetylglucosamine transferase (358 aa).

Residues threonine 11–glycine 13, arginine 163, serine 191, isoleucine 245, and glutamine 290 each bind UDP-N-acetyl-alpha-D-glucosamine.

Belongs to the glycosyltransferase 28 family. MurG subfamily.

The protein resides in the cell inner membrane. It catalyses the reaction di-trans,octa-cis-undecaprenyl diphospho-N-acetyl-alpha-D-muramoyl-L-alanyl-D-glutamyl-meso-2,6-diaminopimeloyl-D-alanyl-D-alanine + UDP-N-acetyl-alpha-D-glucosamine = di-trans,octa-cis-undecaprenyl diphospho-[N-acetyl-alpha-D-glucosaminyl-(1-&gt;4)]-N-acetyl-alpha-D-muramoyl-L-alanyl-D-glutamyl-meso-2,6-diaminopimeloyl-D-alanyl-D-alanine + UDP + H(+). It participates in cell wall biogenesis; peptidoglycan biosynthesis. Its function is as follows. Cell wall formation. Catalyzes the transfer of a GlcNAc subunit on undecaprenyl-pyrophosphoryl-MurNAc-pentapeptide (lipid intermediate I) to form undecaprenyl-pyrophosphoryl-MurNAc-(pentapeptide)GlcNAc (lipid intermediate II). The polypeptide is UDP-N-acetylglucosamine--N-acetylmuramyl-(pentapeptide) pyrophosphoryl-undecaprenol N-acetylglucosamine transferase (Herminiimonas arsenicoxydans).